The sequence spans 88 residues: Small ribosomal subunit protein bS20 (88 aa).

The span at 1 to 16 (MANTHSAKKATRKITR) shows a compositional bias: basic residues. The disordered stretch occupies residues 1–20 (MANTHSAKKATRKITRRTAV).

Belongs to the bacterial ribosomal protein bS20 family.

Binds directly to 16S ribosomal RNA. The polypeptide is Small ribosomal subunit protein bS20 (Nitrobacter hamburgensis (strain DSM 10229 / NCIMB 13809 / X14)).